The sequence spans 386 residues: G2/mitotic-specific cyclin-B2 (386 aa).

The disordered stretch occupies residues 45-64 (TNGKVGPSKKPSKASCAQKP).

This sequence belongs to the cyclin family. Cyclin AB subfamily. In terms of assembly, interacts with the CDK1 protein kinase to form a serine/threonine kinase holoenzyme complex also known as maturation promoting factor (MPF). The cyclin subunit imparts substrate specificity to the complex.

Essential for the control of the cell cycle at the G2/M (mitosis) transition. The polypeptide is G2/mitotic-specific cyclin-B2 (ccnb2) (Oryzias luzonensis (Luzon ricefish)).